A 71-amino-acid polypeptide reads, in one-letter code: Conotoxin LvVIB (71 aa).

The first 17 residues, 1–17, serve as a signal peptide directing secretion; the sequence is VLIIAVLFLTASELVTA. Residues 18–41 constitute a propeptide that is removed on maturation; the sequence is DYTRDKWQYRAASLRDAMRNFRDT. 3 cysteine pairs are disulfide-bonded: cysteine 43-cysteine 57, cysteine 50-cysteine 62, and cysteine 56-cysteine 69.

Belongs to the conotoxin O1 superfamily. In terms of tissue distribution, expressed by the venom duct.

The protein localises to the secreted. This is Conotoxin LvVIB from Conus lividus (Livid cone).